The primary structure comprises 328 residues: Lipoate--protein ligase 1 (328 aa).

Residues 27-214 (PAEESYFLFY…TIFGETEVEE (188 aa)) form the BPL/LPL catalytic domain. Residues arginine 69, 74-77 (GAVY), and lysine 131 each bind ATP. (R)-lipoate is bound at residue lysine 131.

The catalysed reaction is L-lysyl-[lipoyl-carrier protein] + (R)-lipoate + ATP = N(6)-[(R)-lipoyl]-L-lysyl-[lipoyl-carrier protein] + AMP + diphosphate + H(+). The protein operates within protein modification; protein lipoylation via exogenous pathway; protein N(6)-(lipoyl)lysine from lipoate: step 1/2. It participates in protein modification; protein lipoylation via exogenous pathway; protein N(6)-(lipoyl)lysine from lipoate: step 2/2. Functionally, catalyzes the lipoylation of proteins, such as GcvH (SAV0833) and GcvH-L (SAV0324), likely via the ATP-dependent activation of lipoate to lipoyl-AMP and the transfer of the activated lipoyl onto the lipoyl domain of the target protein. This chain is Lipoate--protein ligase 1, found in Staphylococcus aureus (strain Mu50 / ATCC 700699).